Reading from the N-terminus, the 97-residue chain is Serine protease inhibitor Kazal-type 13 (97 aa).

An N-terminal signal peptide occupies residues 1–26 (MKRSGCWHQRMLLSLVLLTWTHVTFS). Residue Asn-33 is glycosylated (N-linked (GlcNAc...) asparagine). A Kazal-like domain is found at 36–97 (RWPKPPCKMY…IQFVKYGKCE (62 aa)). Intrachain disulfides connect Cys-42-Cys-78, Cys-56-Cys-75, and Cys-64-Cys-96.

It is found in the secreted. Functionally, may be a serine protease inhibitor. Essential for sperm maturation and fertility. Inhibits sperm acrosome reaction, protecting sperm from premature reaction. This chain is Serine protease inhibitor Kazal-type 13 (Spink13), found in Mus musculus (Mouse).